The sequence spans 417 residues: Zinc finger CCCH domain-containing protein ZFN-like (417 aa).

2 C3H1-type zinc fingers span residues 31-58 (PGEPDCSYYIRTGLCRFGATCRFNHPPN) and 75-103 (RLGQPECQYYLKTGTCKFGATCRFHHPKD). The segment at 121 to 149 (RPNESERAYYLRTGQCKFGNTCKFHHPQP) adopts a C3H1-type 3; degenerate zinc-finger fold. 2 C3H1-type zinc fingers span residues 278–306 (RPDQPECQFYMKTGDCKFGAVCRFHHPRE) and 324–352 (RPGEPLCVFYSRYGICKFGPSCKFDHPMG). Positions 383-417 (SSEGLVESGTAKPRRLSLSETRPIPPGDDNIDDEG) are disordered.

Its subcellular location is the nucleus. This Pisum sativum (Garden pea) protein is Zinc finger CCCH domain-containing protein ZFN-like.